Consider the following 128-residue polypeptide: DNA-directed RNA polymerase subunit omega (128 aa).

A disordered region spans residues Ala87 to Phe106.

Belongs to the RNA polymerase subunit omega family. The RNAP catalytic core consists of 2 alpha, 1 beta, 1 beta' and 1 omega subunit. When a sigma factor is associated with the core the holoenzyme is formed, which can initiate transcription.

The enzyme catalyses RNA(n) + a ribonucleoside 5'-triphosphate = RNA(n+1) + diphosphate. Promotes RNA polymerase assembly. Latches the N- and C-terminal regions of the beta' subunit thereby facilitating its interaction with the beta and alpha subunits. In Anaplasma marginale (strain Florida), this protein is DNA-directed RNA polymerase subunit omega.